Here is a 135-residue protein sequence, read N- to C-terminus: Classical arabinogalactan protein 4 (135 aa).

Positions methionine 1 to alanine 21 are cleaved as a signal peptide. At glutamine 22 the chain carries Pyrrolidone carboxylic acid. A disordered region spans residues glutamine 22–alanine 112. A 4-hydroxyproline mark is found at proline 24, proline 26, proline 28, proline 32, proline 33, proline 34, proline 37, proline 38, and proline 39. Proline 24, proline 26, proline 28, proline 32, proline 33, proline 34, proline 37, proline 38, and proline 39 each carry an O-linked (Ara...) hydroxyproline glycan. Positions alanine 25–alanine 76 are enriched in pro residues. Residues serine 96–alanine 112 show a composition bias toward low complexity. A lipid anchor (GPI-anchor amidated serine) is attached at serine 111. Positions alanine 112–alanine 135 are cleaved as a propeptide — removed in mature form.

It belongs to the classical AGP family. O-glycosylated on hydroxyprolines; noncontiguous hydroxylproline residues are glycosylated with arabinogalactan. As to expression, highly expressed in roots, flowers and leaves.

The protein localises to the cell membrane. In terms of biological role, proteoglycan that seems to be implicated in diverse developmental roles such as differentiation, cell-cell recognition, embryogenesis and programmed cell death. The chain is Classical arabinogalactan protein 4 (AGP4) from Arabidopsis thaliana (Mouse-ear cress).